Consider the following 215-residue polypeptide: Sodium channel regulatory subunit beta-2 (215 aa).

A signal peptide spans 1–29; the sequence is MHRDAWLPRPAFSLTGLSLFFSLVPPGRS. At 30-157 the chain is on the extracellular side; the sequence is MEVTAPTTLS…LEVPPERDST (128 aa). The 123-residue stretch at 32–154 folds into the Ig-like C2-type domain; the sequence is VTAPTTLSVL…QVLLEVPPER (123 aa). Residues asparagine 42, asparagine 66, and asparagine 74 are each glycosylated (N-linked (GlcNAc...) asparagine). Intrachain disulfides connect cysteine 50–cysteine 127 and cysteine 72–cysteine 75. Residues 158 to 179 traverse the membrane as a helical segment; it reads VAVIVGASVGGFLAVVILVLMV. The Cytoplasmic segment spans residues 180–215; sequence VKCVRRKKEQKLSTDDLKTEEEGKMDGEGNAEDGTK. The disordered stretch occupies residues 188-215; sequence EQKLSTDDLKTEEEGKMDGEGNAEDGTK. Basic and acidic residues predominate over residues 189–215; the sequence is QKLSTDDLKTEEEGKMDGEGNAEDGTK. Position 192 is a phosphoserine (serine 192).

This sequence belongs to the sodium channel auxiliary subunit SCN2B (TC 8.A.17) family. In terms of assembly, a voltage-gated sodium (Nav) channel consists of an ion-conducting pore-forming alpha subunit functional on its own that is regulated by one or more beta subunits. The beta subunit SCN2B is disulfide-linked to the pore-forming alpha subunit. Interacts with SCN1A; regulatory subunit of SCN1A/Nav1.1. Interacts with SCN2A; regulatory subunit of SCN2A/Nav1.2. Interacts with SCN3A; regulatory subunit of SCN3A/Nav1.3. Interacts with SCN5A; regulatory subunit of SCN5A/Nav1.5. Interacts with SCN8A; regulatory subunit of SCN8A/Nav1.6. Interacts with SCN9A; regulatory subunit of SCN9A/Nav1.7. Interacts with SCN10A; regulatory subunit of SCN10A/Nav1.8. Interacts with TNR; may play a crucial role in clustering and regulation of activity of SCN2B-containing Nav channels at nodes of Ranvier.

The protein resides in the cell membrane. It localises to the cell projection. The protein localises to the axon. In terms of biological role, regulatory subunit of multiple voltage-gated sodium (Nav) channels directly mediating the depolarization of excitable membranes. Navs, also called VGSCs (voltage-gated sodium channels) or VDSCs (voltage-dependent sodium channels), operate by switching between closed and open conformations depending on the voltage difference across the membrane. In the open conformation they allow Na(+) ions to selectively pass through the pore, along their electrochemical gradient. The influx of Na+ ions provokes membrane depolarization, initiating the propagation of electrical signals throughout cells and tissues. The accessory beta subunits participate in localization and functional modulation of the Nav channels. Modulates the activity of SCN1A/Nav1.1, SCN2A/Nav1.2, SCN2A/Nav1.3, SCN5A/Nav1.5, SCN8A/Nav1.6, SCN9A/Nav1.7 and SCN10A/Nav1.8. This Mus musculus (Mouse) protein is Sodium channel regulatory subunit beta-2.